Here is a 433-residue protein sequence, read N- to C-terminus: Isocitrate dehydrogenase [NADP], chloroplastic (433 aa).

The N-terminal 21 residues, 1-21 (QFSPNLSFSAFFPIITFTTAT), are a transit peptide targeting the chloroplast. Residues 98–100 (TIT) and R105 each bind NADP(+). Position 100 (T100) interacts with substrate. Residues 117–123 (SPNGTIR), R132, and R155 contribute to the substrate site. D275 is a Mn(2+) binding site. Residue K283 participates in NADP(+) binding. D298 serves as a coordination point for Mn(2+). NADP(+) contacts are provided by residues 333 to 338 (GTVTRH) and N351.

It belongs to the isocitrate and isopropylmalate dehydrogenases family. The cofactor is Mg(2+). Mn(2+) is required as a cofactor. As to expression, detected in all tissues examined.

The protein localises to the plastid. Its subcellular location is the chloroplast. It carries out the reaction D-threo-isocitrate + NADP(+) = 2-oxoglutarate + CO2 + NADPH. The sequence is that of Isocitrate dehydrogenase [NADP], chloroplastic from Medicago sativa (Alfalfa).